Consider the following 182-residue polypeptide: Large ribosomal subunit protein uL6 (182 aa).

Belongs to the universal ribosomal protein uL6 family. In terms of assembly, part of the 50S ribosomal subunit.

This protein binds to the 23S rRNA, and is important in its secondary structure. It is located near the subunit interface in the base of the L7/L12 stalk, and near the tRNA binding site of the peptidyltransferase center. This chain is Large ribosomal subunit protein uL6, found in Carboxydothermus hydrogenoformans (strain ATCC BAA-161 / DSM 6008 / Z-2901).